The chain runs to 475 residues: Ankyrin repeat, SAM and basic leucine zipper domain-containing protein 1 (475 aa).

Residues 1 to 25 (MAASALRGLPVAGGGESSESEDDGW) are disordered. Ser17, Ser18, and Ser20 each carry phosphoserine. ANK repeat units follow at residues 45–74 (EKKE…SVDS), 78–107 (YGWT…NASF), 110–144 (DKQS…DPNV), 148–177 (RLMT…EVNT), 181–210 (NGYT…NKML), and 214–243 (DGKM…PLEG). One can recognise an SAM domain in the interval 272–334 (SYTAFGDLEV…KILAALKELQ (63 aa)).

Interacts with DDX4, PIWIL1, RANBP9 and TDRD1. Expressed exclusively in the testis and ovary and at higher levels in the adult testis compared with the adult ovary.

The protein resides in the cytoplasm. Its function is as follows. Plays a central role during spermatogenesis by repressing transposable elements and preventing their mobilization, which is essential for the germline integrity. Acts via the piRNA metabolic process, which mediates the repression of transposable elements during meiosis by forming complexes composed of piRNAs and Piwi proteins and governs the methylation and subsequent repression of transposons. Its association with pi-bodies suggests a participation in the primary piRNAs metabolic process. Required prior to the pachytene stage to facilitate the production of multiple types of piRNAs, including those associated with repeats involved in the regulation of retrotransposons. May act by mediating protein-protein interactions during germ cell maturation. The protein is Ankyrin repeat, SAM and basic leucine zipper domain-containing protein 1 of Homo sapiens (Human).